The sequence spans 308 residues: tRNA uridine(34) hydroxylase (308 aa).

The Rhodanese domain maps to 129 to 223 (QEKDVLILDA…YGKHPETQGV (95 aa)). Cys183 serves as the catalytic Cysteine persulfide intermediate.

The protein belongs to the TrhO family.

It carries out the reaction uridine(34) in tRNA + AH2 + O2 = 5-hydroxyuridine(34) in tRNA + A + H2O. Functionally, catalyzes oxygen-dependent 5-hydroxyuridine (ho5U) modification at position 34 in tRNAs. The polypeptide is tRNA uridine(34) hydroxylase (Aster yellows witches'-broom phytoplasma (strain AYWB)).